Here is a 263-residue protein sequence, read N- to C-terminus: Protein YpjB (263 aa).

The span at 233-244 shows a compositional bias: acidic residues; it reads DFDDSSSEDDPV. The tract at residues 233–263 is disordered; it reads DFDDSSSEDDPVENSPVVTSPVVSSSKSSFQ. Residues 245-263 are compositionally biased toward low complexity; that stretch reads ENSPVVTSPVVSSSKSSFQ.

In Escherichia coli (strain K12), this protein is Protein YpjB (ypjB).